The chain runs to 129 residues: D-ribose pyranase (129 aa).

Histidine 20 functions as the Proton donor in the catalytic mechanism. Residues aspartate 28, histidine 96, and 118-120 contribute to the substrate site; that span reads YAN.

Belongs to the RbsD / FucU family. RbsD subfamily. Homodecamer.

The protein resides in the cytoplasm. It carries out the reaction beta-D-ribopyranose = beta-D-ribofuranose. The protein operates within carbohydrate metabolism; D-ribose degradation; D-ribose 5-phosphate from beta-D-ribopyranose: step 1/2. Its function is as follows. Catalyzes the interconversion of beta-pyran and beta-furan forms of D-ribose. This chain is D-ribose pyranase, found in Halalkalibacterium halodurans (strain ATCC BAA-125 / DSM 18197 / FERM 7344 / JCM 9153 / C-125) (Bacillus halodurans).